Here is a 366-residue protein sequence, read N- to C-terminus: Ribosomal RNA large subunit methyltransferase M (366 aa).

S-adenosyl-L-methionine is bound by residues Ser-188, 221 to 224 (CPGG), Asp-240, Asp-260, and Asp-277. Residue Lys-306 is the Proton acceptor of the active site.

Belongs to the class I-like SAM-binding methyltransferase superfamily. RNA methyltransferase RlmE family. RlmM subfamily. In terms of assembly, monomer.

Its subcellular location is the cytoplasm. The catalysed reaction is cytidine(2498) in 23S rRNA + S-adenosyl-L-methionine = 2'-O-methylcytidine(2498) in 23S rRNA + S-adenosyl-L-homocysteine + H(+). Its function is as follows. Catalyzes the 2'-O-methylation at nucleotide C2498 in 23S rRNA. This Escherichia coli O139:H28 (strain E24377A / ETEC) protein is Ribosomal RNA large subunit methyltransferase M.